The primary structure comprises 124 residues: Small ribosomal subunit protein eS25 (124 aa).

Positions 1-22 (MPPKDSKQKKDTSKAKKDKDPV) are enriched in basic and acidic residues. The tract at residues 1–37 (MPPKDSKQKKDTSKAKKDKDPVNKSGGKAKKKKWSKG) is disordered. A compositionally biased stretch (basic residues) spans 27 to 37 (GKAKKKKWSKG).

The protein belongs to the eukaryotic ribosomal protein eS25 family. In terms of assembly, component of the small ribosomal subunit.

The protein resides in the cytoplasm. Component of the small ribosomal subunit. The ribosome is a large ribonucleoprotein complex responsible for the synthesis of proteins in the cell. This chain is Small ribosomal subunit protein eS25 (rps25), found in Ictalurus punctatus (Channel catfish).